We begin with the raw amino-acid sequence, 119 residues long: Hemerythrin subunit A (119 aa).

Fe cation-binding residues include H26, H55, E59, H74, H78, H107, and D112.

It belongs to the hemerythrin family.

Its function is as follows. Hemerythrin is a respiratory protein in blood cells of certain marine worms. The oxygen-binding site in each chain contains two iron atoms. This chain is Hemerythrin subunit A, found in Sipunculus nudus (Sipunculan worm).